The following is a 138-amino-acid chain: MIVRTLEECRQSERRVVAENWESVRMLLKDDHMGFSFHITTIYANTQTHIHYRNHLESVYCMSGEGEIEVVGGKTYPIQPGTLYILDQHDEHYLRAFSSEMVMACVFNPPLTGHEIHDAEGVYPLDKSELISQCHKEK.

Belongs to the ectoine synthase family.

The enzyme catalyses (2S)-4-acetamido-2-aminobutanoate = L-ectoine + H2O. It functions in the pathway amine and polyamine biosynthesis; ectoine biosynthesis; L-ectoine from L-aspartate 4-semialdehyde: step 3/3. Its function is as follows. Catalyzes the circularization of gamma-N-acetyl-alpha,gamma-diaminobutyric acid (ADABA) to ectoine (1,4,5,6-tetrahydro-2-methyl-4-pyrimidine carboxylic acid), which is an excellent osmoprotectant. This chain is L-ectoine synthase, found in Vibrio cholerae serotype O1 (strain ATCC 39541 / Classical Ogawa 395 / O395).